Here is a 314-residue protein sequence, read N- to C-terminus: TPR repeat-containing protein MJ1345 (314 aa).

TPR repeat units lie at residues 12–45, 46–78, 80–112, 114–146, 147–180, 182–214, 215–248, 249–282, and 284–313; these read ESIL…RESP, DVYV…KPKY, LANF…EKSD, PVKY…YPKS, AIAW…NPKD, QSLL…NNKD, IRAL…NPDD, PLLY…NPNI, and DAWN…LDIY.

The protein is TPR repeat-containing protein MJ1345 of Methanocaldococcus jannaschii (strain ATCC 43067 / DSM 2661 / JAL-1 / JCM 10045 / NBRC 100440) (Methanococcus jannaschii).